The sequence spans 115 residues: MNPLIQSLTEGQLRTDIPSFRPGDTVRVHAKVVEGNRERIQIFEGVVIARKGAGISENYTVRKISNGVGVERIFPIHTPRVEKIEVVRYGKVRRAKLYYLRALQGKAARIKEIRR.

Belongs to the bacterial ribosomal protein bL19 family.

Functionally, this protein is located at the 30S-50S ribosomal subunit interface and may play a role in the structure and function of the aminoacyl-tRNA binding site. The polypeptide is Large ribosomal subunit protein bL19 (Streptococcus pneumoniae (strain JJA)).